The chain runs to 284 residues: 2-dehydro-3-deoxyphosphooctonate aldolase (284 aa).

It belongs to the KdsA family.

The protein resides in the cytoplasm. The catalysed reaction is D-arabinose 5-phosphate + phosphoenolpyruvate + H2O = 3-deoxy-alpha-D-manno-2-octulosonate-8-phosphate + phosphate. The protein operates within carbohydrate biosynthesis; 3-deoxy-D-manno-octulosonate biosynthesis; 3-deoxy-D-manno-octulosonate from D-ribulose 5-phosphate: step 2/3. It participates in bacterial outer membrane biogenesis; lipopolysaccharide biosynthesis. The protein is 2-dehydro-3-deoxyphosphooctonate aldolase of Pectobacterium atrosepticum (strain SCRI 1043 / ATCC BAA-672) (Erwinia carotovora subsp. atroseptica).